A 357-amino-acid polypeptide reads, in one-letter code: MTDSTNVSNTENLMKYMSLDQRGSVMAEYIWIDAHGGTRSKTKTLSKAPSSVDELPEWNFDGSSTAQAPGDNSDVYLRPVAMYPDPFRRGDNILVLCETWDSDGSPNKFNYRHDCARLMETHAKEEFWFGLEQEYTLLGPDGWPYGWPKGGFPGAQGPYYCGVGTGKVYCRDIVEAHYRACLYAGVKISGINAEVMPSQWEYQVGPCHGIEMGDHLWISRFLLHRVAEEFGVKISFDPKPIKGDWNGAGLHTNVSTTSTRAEGGIKAIESYMKKLEARHVEHIAVYGEGNEERLTGRHETGNIDKFSYGVADRGGSIRIPRQVAKDGKGYFEDRRPASNADPYQITGIIAETLCGGL.

Residues 25–104 form the GS beta-grasp domain; that stretch reads VMAEYIWIDA…VLCETWDSDG (80 aa). The region spanning 111-357 is the GS catalytic domain; that stretch reads YRHDCARLME…IIAETLCGGL (247 aa).

It belongs to the glutamine synthetase family. Homooctamer.

It localises to the cytoplasm. It carries out the reaction L-glutamate + NH4(+) + ATP = L-glutamine + ADP + phosphate + H(+). This Emericella nidulans (strain FGSC A4 / ATCC 38163 / CBS 112.46 / NRRL 194 / M139) (Aspergillus nidulans) protein is Glutamine synthetase (glnA).